The chain runs to 408 residues: Glutamate N-acetyltransferase (408 aa).

Thr150, Lys176, Thr189, Glu271, Asn403, and Thr408 together coordinate substrate. Thr189 acts as the Nucleophile in catalysis.

It belongs to the ArgJ family. Heterotetramer of two alpha and two beta chains.

It localises to the cytoplasm. The catalysed reaction is N(2)-acetyl-L-ornithine + L-glutamate = N-acetyl-L-glutamate + L-ornithine. It functions in the pathway amino-acid biosynthesis; L-arginine biosynthesis; L-ornithine and N-acetyl-L-glutamate from L-glutamate and N(2)-acetyl-L-ornithine (cyclic): step 1/1. Catalyzes the transfer of the acetyl group from N(2)-acetylornithine to glutamate, forming N-acetylglutamate and L-ornithine. The chain is Glutamate N-acetyltransferase from Methanococcus vannielii (strain ATCC 35089 / DSM 1224 / JCM 13029 / OCM 148 / SB).